The sequence spans 317 residues: Melanocyte-stimulating hormone receptor (317 aa).

Residues 1–37 (MPVQGSQRRLLGSLNSTPTATPRLGLAANQTGARCLE) lie on the Extracellular side of the membrane. An N-linked (GlcNAc...) asparagine glycan is attached at Asn-29. Residues 38-63 (VSIPDGLFLSLGLVSLVENVLVVVAI) traverse the membrane as a helical segment. The Cytoplasmic portion of the chain corresponds to 64–72 (ARNRNLHSP). The chain crosses the membrane as a helical span at residues 73–93 (MYCFICCLALSDLLVSGSNML). At 94–118 (DTAVILLLEAGALAARAAVVQQLDN) the chain is on the extracellular side. Residues 119 to 140 (VIDVITCSSMLSSLCFLGAIAV) traverse the membrane as a helical segment. Residues 141 to 163 (DRYISIFYALRYHSIVTLRRARR) are Cytoplasmic-facing. A helical transmembrane segment spans residues 164–183 (VVAAIWVASILFSTLFIAYC). At 184 to 191 (DHAAVLLC) the chain is on the extracellular side. Residues 192 to 211 (LVVFFLAMLVLMAVLYVHML) traverse the membrane as a helical segment. Residues 212-240 (ARACQHAQGIAQLHKRQRPAHQGVGLKGA) are Cytoplasmic-facing. Residues 241 to 266 (ATLTILLGIFFLCWGPFFLHLTLIVL) form a helical membrane-spanning segment. At 267-279 (CPQHPTCSCIFKN) the chain is on the extracellular side. A helical transmembrane segment spans residues 280–300 (FNLFLTLIICNAIIDPLIYAF). The Cytoplasmic portion of the chain corresponds to 301–317 (RSQELRRTLKKVLLCSW). Cys-315 carries S-palmitoyl cysteine lipidation.

It belongs to the G-protein coupled receptor 1 family. As to quaternary structure, interacts with MGRN1, but does not undergo MGRN1-mediated ubiquitination; this interaction competes with GNAS-binding and thus inhibits agonist-induced cAMP production. Interacts with OPN3; the interaction results in a decrease in MC1R-mediated cAMP signaling and ultimately a decrease in melanin production in melanocytes.

Its subcellular location is the cell membrane. In terms of biological role, receptor for MSH (alpha, beta and gamma) and ACTH. The activity of this receptor is mediated by G proteins which activate adenylate cyclase. Mediates melanogenesis, the production of eumelanin (black/brown) and phaeomelanin (red/yellow), via regulation of cAMP signaling in melanocytes. This chain is Melanocyte-stimulating hormone receptor (MC1R), found in Trachypithecus francoisi (Francois' leaf monkey).